Reading from the N-terminus, the 522-residue chain is Involucrin (522 aa).

The segment covering 1-15 (MSQQHTLPVTLSPAL) has biased composition (polar residues). 3 disordered regions span residues 1–126 (MSQQ…LEEE), 159–329 (QEGQ…LVQQ), and 366–496 (QEGQ…QPVL). Over residues 76–91 (EQQQQEPQEQELQQQH) the composition is skewed to low complexity. A compositionally biased stretch (basic and acidic residues) spans 92–126 (WEQHEEHQKAENPEQQLKQEKAQRDQQLNEHLEEE). Low complexity predominate over residues 169–181 (QEGQLELPEQQEG). Composition is skewed to basic and acidic residues over residues 182–198 (QLEH…HLDQ), 214–231 (KHLE…HQKG), 252–264 (QLKH…KQPE), 274–290 (KHLE…EHQE), and 305–323 (QLEE…EGQL). The span at 375–389 (QQQGQLEVSEQQVGQ) shows a compositional bias: low complexity. 3 stretches are compositionally biased toward basic and acidic residues: residues 391–401 (KHLEQEGKQLE), 409–418 (QLKHLEKQEA), and 431–465 (KHPE…DLEQ). Residues 466-479 (QKGQLEQQQGQLEQ) show a composition bias toward low complexity.

This sequence belongs to the involucrin family. In terms of assembly, directly or indirectly cross-linked to cornifelin (CNFN). In terms of processing, substrate of transglutaminase. Specific glutamines or lysines are cross-linked to keratins, desmoplakin and to inter involucrin molecules. In terms of tissue distribution, keratinocytes of epidermis and other stratified squamous epithelia.

The protein localises to the cytoplasm. Its function is as follows. Part of the insoluble cornified cell envelope (CE) of stratified squamous epithelia. The protein is Involucrin (IVL) of Hylobates lar (Lar gibbon).